The following is a 332-amino-acid chain: dTDP-3,4-didehydro-2,6-dideoxy-alpha-D-glucose 3-reductase (332 aa).

12–18 contacts NADP(+); the sequence is CASFAWR. Substrate is bound at residue R19. Residues 37 to 38, Y58, L74, and H79 each bind NADP(+); that span reads SR. The active-site Proton donor is K97. R165 and D177 together coordinate NADP(+). Positions 235 and 255 each coordinate substrate.

Belongs to the Gfo/Idh/MocA family. In terms of assembly, monomer.

The catalysed reaction is dTDP-4-dehydro-2,6-dideoxy-alpha-D-glucose + NADP(+) = dTDP-3,4-didehydro-2,6-dideoxy-alpha-D-glucose + NADPH + H(+). In terms of biological role, involved in the biosynthesis of forosamine ((4-dimethylamino)-2,3,4,6-tetradeoxy-alpha-D-threo-hexopyranose), a highly deoxygenated sugar component of several bioactive natural products such as the insecticidal spinosyns A and D. Catalyzes the reduction of the C-3 keto moiety of dTDP-3,4-diketo-2,6-dideoxy-alpha-D-glucose to yield dTDP-4-keto-2,6-dideoxy-alpha-D-glucose. NADPH is the better reductant, however NADH can also be used. The polypeptide is dTDP-3,4-didehydro-2,6-dideoxy-alpha-D-glucose 3-reductase (Saccharopolyspora spinosa).